The primary structure comprises 322 residues: Beta-ketoacyl-[acyl-carrier-protein] synthase III (322 aa).

Residues C113 and H249 contribute to the active site. The ACP-binding stretch occupies residues 250–254; it reads QANIR. Residue N279 is part of the active site.

This sequence belongs to the thiolase-like superfamily. FabH family. Homodimer.

Its subcellular location is the cytoplasm. The catalysed reaction is malonyl-[ACP] + acetyl-CoA + H(+) = 3-oxobutanoyl-[ACP] + CO2 + CoA. It functions in the pathway lipid metabolism; fatty acid biosynthesis. Functionally, catalyzes the condensation reaction of fatty acid synthesis by the addition to an acyl acceptor of two carbons from malonyl-ACP. Catalyzes the first condensation reaction which initiates fatty acid synthesis and may therefore play a role in governing the total rate of fatty acid production. Possesses both acetoacetyl-ACP synthase and acetyl transacylase activities. Its substrate specificity determines the biosynthesis of branched-chain and/or straight-chain of fatty acids. The polypeptide is Beta-ketoacyl-[acyl-carrier-protein] synthase III (Thioalkalivibrio sulfidiphilus (strain HL-EbGR7)).